We begin with the raw amino-acid sequence, 485 residues long: NADH-quinone oxidoreductase subunit N (485 aa).

14 helical membrane-spanning segments follow: residues 8 to 28 (LIAL…MLSI), 35 to 55 (FLNA…LWFV), 71 to 91 (GFAM…CTFA), 105 to 125 (FYLL…ANHL), 127 to 147 (SLFL…GYAF), 159 to 179 (YTIL…LVYA), 203 to 223 (LLAG…LVPF), 235 to 255 (PAPV…GVVM), 271 to 291 (VVLA…ALSQ), 297 to 317 (LLGY…IALQ), 326 to 346 (VGVY…VVSL), 373 to 393 (AAVM…LGFI), 408 to 430 (WWLV…RVAV), and 455 to 475 (IVVL…QPLI).

Belongs to the complex I subunit 2 family. NDH-1 is composed of 13 different subunits. Subunits NuoA, H, J, K, L, M, N constitute the membrane sector of the complex.

The protein localises to the cell inner membrane. It catalyses the reaction a quinone + NADH + 5 H(+)(in) = a quinol + NAD(+) + 4 H(+)(out). Its function is as follows. NDH-1 shuttles electrons from NADH, via FMN and iron-sulfur (Fe-S) centers, to quinones in the respiratory chain. The immediate electron acceptor for the enzyme in this species is believed to be ubiquinone. Couples the redox reaction to proton translocation (for every two electrons transferred, four hydrogen ions are translocated across the cytoplasmic membrane), and thus conserves the redox energy in a proton gradient. This is NADH-quinone oxidoreductase subunit N from Escherichia coli O1:K1 / APEC.